Consider the following 388-residue polypeptide: F-box protein At3g49510 (388 aa).

One can recognise an F-box domain in the interval 1 to 47; it reads MTTISDLSDDLVGDILSRVPFTSLISVRSTCKKWNALSKNQIFGRKT.

This is F-box protein At3g49510 from Arabidopsis thaliana (Mouse-ear cress).